The sequence spans 622 residues: Chaperone protein HtpG (622 aa).

The a; substrate-binding stretch occupies residues 1–334; the sequence is MKGQETRGFQ…SNDLPLNVSR (334 aa). The b stretch occupies residues 335 to 550; the sequence is EILQDSRITQ…ADEMSTQMAK (216 aa). The segment at 551–622 is c; that stretch reads LFAAAGQQAP…IRRMNQLLTA (72 aa).

Belongs to the heat shock protein 90 family. As to quaternary structure, homodimer.

It is found in the cytoplasm. In terms of biological role, molecular chaperone. Has ATPase activity. This Yersinia pestis protein is Chaperone protein HtpG.